Consider the following 618-residue polypeptide: Rho guanine nucleotide exchange factor 25 (618 aa).

2 disordered regions span residues 26–63 and 169–193; these read CAVPGQEGPPERDPLGPGSTKTESDCIEEDQTGQREPE and GPGDKAQPAEEETLSQAPKNEEEQK. Residues 199-375 form the DH domain; the sequence is RSMFVLGELV…CFVPKRCNDM (177 aa). The important for binding to Rho GTPases stretch occupies residues 317–338; that stretch reads LGHRLQLNDLLIKPVQRIMKYQ. Residues 387–505 enclose the PH domain; the sequence is KLTAQGKLLG…WIKQVAQILE (119 aa). The tract at residues 506–532 is sufficient to bind activated GNAQ; the sequence is SQRDFLNALQSPIEYQRRESQTNSLGR. Disordered stretches follow at residues 521–556 and 584–604; these read QRRESQTNSLGRPGGPWVGSPGRMRPGDLAQASMHT and ALSDTPQTPHDSPALPTVNTP. Over residues 584-593 the composition is skewed to polar residues; sequence ALSDTPQTPH.

Interacts with activated GNAQ and GNA11. Interacts (via the DH domain) with POPDC1 (via the C-terminus cytoplasmic tail). Interacts with RHOA, CDC42 and RAC1. As to expression, highly expressed in excitable tissues, such as brain, heart and muscle. Elevated expression in hippocampus and cerebellum.

It localises to the cytoplasm. Its subcellular location is the myofibril. The protein resides in the sarcomere. The protein localises to the cell membrane. In terms of biological role, may play a role in actin cytoskeleton reorganization in different tissues since its activation induces formation of actin stress fibers. It works as a guanine nucleotide exchange factor for Rho family of small GTPases. Links specifically G alpha q/11-coupled receptors to RHOA activation. May be an important regulator of processes involved in axon and dendrite formation. In neurons seems to be an exchange factor primarily for RAC1. Involved in skeletal myogenesis. The chain is Rho guanine nucleotide exchange factor 25 (Arhgef25) from Mus musculus (Mouse).